Reading from the N-terminus, the 288-residue chain is UTP--glucose-1-phosphate uridylyltransferase (288 aa).

This sequence belongs to the UDPGP type 2 family.

It catalyses the reaction alpha-D-glucose 1-phosphate + UTP + H(+) = UDP-alpha-D-glucose + diphosphate. The protein operates within glycolipid metabolism; diglucosyl-diacylglycerol biosynthesis. In terms of biological role, catalyzes the formation of UDP-glucose from glucose-1-phosphate and UTP. This is an intermediate step in the biosynthesis of diglucosyl-diacylglycerol (Glc2-DAG), i.e. the predominant glycolipid found in the S.aureus membrane, which is also used as a membrane anchor for lipoteichoic acid (LTA). This chain is UTP--glucose-1-phosphate uridylyltransferase (gtaB), found in Staphylococcus aureus (strain bovine RF122 / ET3-1).